We begin with the raw amino-acid sequence, 268 residues long: Glutamate racemase (268 aa).

Residues 13–14 (DS) and 45–46 (YG) contribute to the substrate site. C77 acts as the Proton donor/acceptor in catalysis. Position 78–79 (78–79 (NT)) interacts with substrate. C185 acts as the Proton donor/acceptor in catalysis. Residue 186–187 (TH) participates in substrate binding.

This sequence belongs to the aspartate/glutamate racemases family.

It catalyses the reaction L-glutamate = D-glutamate. The protein operates within cell wall biogenesis; peptidoglycan biosynthesis. Functionally, provides the (R)-glutamate required for cell wall biosynthesis. The sequence is that of Glutamate racemase from Vibrio campbellii (strain ATCC BAA-1116).